A 155-amino-acid chain; its full sequence is Small ribosomal subunit protein uS7c (155 aa).

The protein belongs to the universal ribosomal protein uS7 family. As to quaternary structure, part of the 30S ribosomal subunit.

It is found in the plastid. Its subcellular location is the chloroplast. Its function is as follows. One of the primary rRNA binding proteins, it binds directly to 16S rRNA where it nucleates assembly of the head domain of the 30S subunit. This is Small ribosomal subunit protein uS7c (rps7) from Metasequoia glyptostroboides (Dawn redwood).